The primary structure comprises 396 residues: Elongation factor Tu (396 aa).

One can recognise a tr-type G domain in the interval 10 to 206 (KPHVNVGTIG…ALDTYIPTPE (197 aa)). The G1 stretch occupies residues 19–26 (GHVDHGKT). 19-26 (GHVDHGKT) contributes to the GTP binding site. Residue T26 coordinates Mg(2+). Positions 60 to 64 (GITIN) are G2. Residues 81–84 (DCPG) are G3. Residues 81–85 (DCPGH) and 136–139 (NKCD) each bind GTP. The tract at residues 136–139 (NKCD) is G4. A G5 region spans residues 174 to 176 (SAK).

It belongs to the TRAFAC class translation factor GTPase superfamily. Classic translation factor GTPase family. EF-Tu/EF-1A subfamily. As to quaternary structure, monomer.

The protein resides in the cytoplasm. The catalysed reaction is GTP + H2O = GDP + phosphate + H(+). Its function is as follows. GTP hydrolase that promotes the GTP-dependent binding of aminoacyl-tRNA to the A-site of ribosomes during protein biosynthesis. The polypeptide is Elongation factor Tu (Thiomonas delicata (Thiomonas cuprina)).